Reading from the N-terminus, the 214-residue chain is Large ribosomal subunit protein bL25 (214 aa).

The disordered stretch occupies residues 193 to 214 (PRAAAEEEDTGAEGDVEAADAE). Acidic residues predominate over residues 198 to 214 (EEEDTGAEGDVEAADAE).

The protein belongs to the bacterial ribosomal protein bL25 family. CTC subfamily. Part of the 50S ribosomal subunit; part of the 5S rRNA/L5/L18/L25 subcomplex. Contacts the 5S rRNA. Binds to the 5S rRNA independently of L5 and L18.

Functionally, this is one of the proteins that binds to the 5S RNA in the ribosome where it forms part of the central protuberance. This is Large ribosomal subunit protein bL25 from Nitrosococcus oceani (strain ATCC 19707 / BCRC 17464 / JCM 30415 / NCIMB 11848 / C-107).